A 295-amino-acid polypeptide reads, in one-letter code: 33 kDa chaperonin (295 aa).

2 cysteine pairs are disulfide-bonded: Cys-233/Cys-235 and Cys-267/Cys-270.

It belongs to the HSP33 family. Post-translationally, under oxidizing conditions two disulfide bonds are formed involving the reactive cysteines. Under reducing conditions zinc is bound to the reactive cysteines and the protein is inactive.

The protein localises to the cytoplasm. In terms of biological role, redox regulated molecular chaperone. Protects both thermally unfolding and oxidatively damaged proteins from irreversible aggregation. Plays an important role in the bacterial defense system toward oxidative stress. The sequence is that of 33 kDa chaperonin from Mannheimia succiniciproducens (strain KCTC 0769BP / MBEL55E).